We begin with the raw amino-acid sequence, 304 residues long: Quinolinate synthase (304 aa).

Residues His-24 and Ser-41 each coordinate iminosuccinate. [4Fe-4S] cluster is bound at residue Cys-86. Residues 112–114 and Ser-129 each bind iminosuccinate; that span reads YVN. Position 171 (Cys-171) interacts with [4Fe-4S] cluster. Iminosuccinate is bound by residues 197–199 and Thr-214; that span reads HPE. Cys-259 contributes to the [4Fe-4S] cluster binding site.

The protein belongs to the quinolinate synthase family. Type 2 subfamily. [4Fe-4S] cluster is required as a cofactor.

The protein localises to the cytoplasm. It carries out the reaction iminosuccinate + dihydroxyacetone phosphate = quinolinate + phosphate + 2 H2O + H(+). It functions in the pathway cofactor biosynthesis; NAD(+) biosynthesis; quinolinate from iminoaspartate: step 1/1. Its function is as follows. Catalyzes the condensation of iminoaspartate with dihydroxyacetone phosphate to form quinolinate. The polypeptide is Quinolinate synthase (Geobacter metallireducens (strain ATCC 53774 / DSM 7210 / GS-15)).